The sequence spans 304 residues: Quinolinate synthase (304 aa).

2 residues coordinate iminosuccinate: His24 and Ser41. Cys86 is a [4Fe-4S] cluster binding site. Residues 112 to 114 and Ser129 contribute to the iminosuccinate site; that span reads YVN. Cys171 provides a ligand contact to [4Fe-4S] cluster. Residues 197–199 and Thr214 contribute to the iminosuccinate site; that span reads HPE. Residue Cys259 participates in [4Fe-4S] cluster binding.

Belongs to the quinolinate synthase family. Type 2 subfamily. [4Fe-4S] cluster is required as a cofactor.

It localises to the cytoplasm. It carries out the reaction iminosuccinate + dihydroxyacetone phosphate = quinolinate + phosphate + 2 H2O + H(+). It functions in the pathway cofactor biosynthesis; NAD(+) biosynthesis; quinolinate from iminoaspartate: step 1/1. In terms of biological role, catalyzes the condensation of iminoaspartate with dihydroxyacetone phosphate to form quinolinate. The polypeptide is Quinolinate synthase (Methanosarcina barkeri (strain Fusaro / DSM 804)).